We begin with the raw amino-acid sequence, 727 residues long: Pre-B-cell leukemia transcription factor-interacting protein 1 (727 aa).

Residues Met1–Ser10 are compositionally biased toward polar residues. The tract at residues Met1–Pro135 is disordered. The span at Arg39–Ala53 shows a compositional bias: low complexity. Ser43 is modified (phosphoserine). Residues Thr61 to Ser70 are compositionally biased toward polar residues. Phosphoserine is present on residues Ser130, Ser134, Ser147, Ser148, and Ser149. Thr153 is subject to Phosphothreonine. 2 coiled-coil regions span residues Gln269–Asp353 and Ser380–Glu421. The Nuclear localization signal signature appears at Trp488 to Trp506. Disordered regions lie at residues Glu491–Arg568 and Lys701–Gly727. 3 stretches are compositionally biased toward basic and acidic residues: residues Glu498–Arg544, Pro551–Arg568, and Gly716–Gly727. The short motif at Asp696–Glu719 is the Nuclear localization signal element.

As to quaternary structure, interacts with ESR1, PBX1, PBX2 and PBX3. Interacts with TEX11.

Its subcellular location is the cytoplasm. The protein localises to the cytoskeleton. It is found in the nucleus. Regulator of pre-B-cell leukemia transcription factors (BPXs) function. Inhibits the binding of PBX1-HOX complex to DNA and blocks the transcriptional activity of E2A-PBX1. Tethers estrogen receptor-alpha (ESR1) to microtubules and allows them to influence estrogen receptors-alpha signaling. This Bos taurus (Bovine) protein is Pre-B-cell leukemia transcription factor-interacting protein 1 (PBXIP1).